Here is a 199-residue protein sequence, read N- to C-terminus: N-(5'-phosphoribosyl)anthranilate isomerase (199 aa).

Belongs to the TrpF family.

The catalysed reaction is N-(5-phospho-beta-D-ribosyl)anthranilate = 1-(2-carboxyphenylamino)-1-deoxy-D-ribulose 5-phosphate. It functions in the pathway amino-acid biosynthesis; L-tryptophan biosynthesis; L-tryptophan from chorismate: step 3/5. This Solibacter usitatus (strain Ellin6076) protein is N-(5'-phosphoribosyl)anthranilate isomerase.